Here is a 492-residue protein sequence, read N- to C-terminus: MRKALLSVSDKTGIIPFAERLTELDFELYSTGGTKKALEDNDIAVKSVSELTNFPEIMDGRVKTLHPNIHGGILADRNNPEHIKAMETHGIQPLDLVVVNLYPFEATVANPDVTEMDAIENIDIGGPTMLRSSAKNFRHVITVVDPADYDEVIEKLKTDTLDETFRKQLMIKVFTHTNKYDAAIVNFFSDNTSTLRYGENPHQKARFIKTDAKPNTLAGARVLHGKPLSFNNIKDADATLFLVKQFDMPAAVAVKHMNPCGVGTGEVISEAFQNAYDADSQSIFGGIVALNREVDKATAEKMHAIFLEVIIAPKFSDEALEILTAKKNIRLLEIDMDMDKDEEEFVSVSGGYLVQDKDLLNVTREDMRVVTNTEPTEAQWKAIELGWKVVKSVKSNAIVLANDKQTVGIGAGQMNRVGAAKIAIERAIEMNDNVVLASDGFFPMSDTVETAYAAGIKCIVQPGGSIKDQDSIDKANEYGIAMVMTDVRHFKH.

In terms of domain architecture, MGS-like spans 1-144; the sequence is MRKALLSVSD…KNFRHVITVV (144 aa).

This sequence belongs to the PurH family.

The enzyme catalyses (6R)-10-formyltetrahydrofolate + 5-amino-1-(5-phospho-beta-D-ribosyl)imidazole-4-carboxamide = 5-formamido-1-(5-phospho-D-ribosyl)imidazole-4-carboxamide + (6S)-5,6,7,8-tetrahydrofolate. The catalysed reaction is IMP + H2O = 5-formamido-1-(5-phospho-D-ribosyl)imidazole-4-carboxamide. Its pathway is purine metabolism; IMP biosynthesis via de novo pathway; 5-formamido-1-(5-phospho-D-ribosyl)imidazole-4-carboxamide from 5-amino-1-(5-phospho-D-ribosyl)imidazole-4-carboxamide (10-formyl THF route): step 1/1. The protein operates within purine metabolism; IMP biosynthesis via de novo pathway; IMP from 5-formamido-1-(5-phospho-D-ribosyl)imidazole-4-carboxamide: step 1/1. The protein is Bifunctional purine biosynthesis protein PurH of Macrococcus caseolyticus (strain JCSC5402) (Macrococcoides caseolyticum).